A 71-amino-acid polypeptide reads, in one-letter code: Heat-stable enterotoxin II (71 aa).

Positions 1-23 (MKKNIAFLLASMFVFSIATNAYA) are cleaved as a signal peptide. Disulfide bonds link Cys33–Cys71 and Cys44–Cys59.

It localises to the secreted. Its function is as follows. Toxin which activates the particulate form of guanylate cyclase and increases cyclic GMP levels within the host intestinal epithelial cells. The polypeptide is Heat-stable enterotoxin II (stiI) (Escherichia coli).